A 290-amino-acid chain; its full sequence is ATP synthase gamma chain (290 aa).

The protein belongs to the ATPase gamma chain family. F-type ATPases have 2 components, CF(1) - the catalytic core - and CF(0) - the membrane proton channel. CF(1) has five subunits: alpha(3), beta(3), gamma(1), delta(1), epsilon(1). CF(0) has three main subunits: a, b and c.

Its subcellular location is the cell membrane. Produces ATP from ADP in the presence of a proton gradient across the membrane. The gamma chain is believed to be important in regulating ATPase activity and the flow of protons through the CF(0) complex. This is ATP synthase gamma chain from Listeria innocua serovar 6a (strain ATCC BAA-680 / CLIP 11262).